Consider the following 855-residue polypeptide: DNA mismatch repair protein MutS (855 aa).

617-624 (GPNMGGKS) lines the ATP pocket.

This sequence belongs to the DNA mismatch repair MutS family.

In terms of biological role, this protein is involved in the repair of mismatches in DNA. It is possible that it carries out the mismatch recognition step. This protein has a weak ATPase activity. The polypeptide is DNA mismatch repair protein MutS (Baumannia cicadellinicola subsp. Homalodisca coagulata).